The sequence spans 99 residues: Prostate and testis expressed protein 4 (99 aa).

Positions 1-23 are cleaved as a signal peptide; that stretch reads MNSVTKISTLLIVILSFLCFVEG. The UPAR/Ly6 domain maps to 24-99; that stretch reads LICNSCEKSR…CCEKNLCNSF (76 aa). 4 disulfides stabilise this stretch: Cys26/Cys52, Cys29/Cys37, Cys44/Cys70, and Cys74/Cys90.

In terms of tissue distribution, expressed in prostate, testis, eye, kidney and skeletal muscle. Expressed in the dorsal lobe of prostate. Not expressed in the ventral lobe of prostate.

The protein resides in the secreted. Its function is as follows. Enhances sperm motility. Binds to calmodulin and inhibits calcium transport into spermatozoa. May modulate the function of nicotinic acetylcholine receptors. The sequence is that of Prostate and testis expressed protein 4 (Pate4) from Mus musculus (Mouse).